A 142-amino-acid chain; its full sequence is Large ribosomal subunit protein uL13 (142 aa).

It belongs to the universal ribosomal protein uL13 family. As to quaternary structure, part of the 50S ribosomal subunit.

This protein is one of the early assembly proteins of the 50S ribosomal subunit, although it is not seen to bind rRNA by itself. It is important during the early stages of 50S assembly. The chain is Large ribosomal subunit protein uL13 from Acidithiobacillus ferrooxidans (strain ATCC 23270 / DSM 14882 / CIP 104768 / NCIMB 8455) (Ferrobacillus ferrooxidans (strain ATCC 23270)).